Here is a 326-residue protein sequence, read N- to C-terminus: N-acetyl-gamma-glutamyl-phosphate reductase (326 aa).

The active site involves cysteine 155.

Belongs to the NAGSA dehydrogenase family. Type 1 subfamily.

Its subcellular location is the cytoplasm. The catalysed reaction is N-acetyl-L-glutamate 5-semialdehyde + phosphate + NADP(+) = N-acetyl-L-glutamyl 5-phosphate + NADPH + H(+). Its pathway is amino-acid biosynthesis; L-arginine biosynthesis; N(2)-acetyl-L-ornithine from L-glutamate: step 3/4. Catalyzes the NADPH-dependent reduction of N-acetyl-5-glutamyl phosphate to yield N-acetyl-L-glutamate 5-semialdehyde. The chain is N-acetyl-gamma-glutamyl-phosphate reductase from Shewanella oneidensis (strain ATCC 700550 / JCM 31522 / CIP 106686 / LMG 19005 / NCIMB 14063 / MR-1).